Consider the following 164-residue polypeptide: NAD(P)H-quinone oxidoreductase subunit I, chloroplastic (164 aa).

4Fe-4S ferredoxin-type domains lie at Gly55–Lys84 and Leu95–Glu124. [4Fe-4S] cluster is bound by residues Cys64, Cys67, Cys70, Cys74, Cys104, Cys107, Cys110, and Cys114.

It belongs to the complex I 23 kDa subunit family. NDH is composed of at least 16 different subunits, 5 of which are encoded in the nucleus. [4Fe-4S] cluster serves as cofactor.

The protein localises to the plastid. It is found in the chloroplast thylakoid membrane. It carries out the reaction a plastoquinone + NADH + (n+1) H(+)(in) = a plastoquinol + NAD(+) + n H(+)(out). The enzyme catalyses a plastoquinone + NADPH + (n+1) H(+)(in) = a plastoquinol + NADP(+) + n H(+)(out). NDH shuttles electrons from NAD(P)H:plastoquinone, via FMN and iron-sulfur (Fe-S) centers, to quinones in the photosynthetic chain and possibly in a chloroplast respiratory chain. The immediate electron acceptor for the enzyme in this species is believed to be plastoquinone. Couples the redox reaction to proton translocation, and thus conserves the redox energy in a proton gradient. The chain is NAD(P)H-quinone oxidoreductase subunit I, chloroplastic from Daucus carota (Wild carrot).